The chain runs to 63 residues: Rubredoxin-2 (63 aa).

The Rubredoxin-like domain occupies 8–59 (YKLFRCLQCGFEYDEAIGWPDDGIEPGTRWDEIPEDWSCPDCGAAKVDFEMV). Cys13, Cys16, Cys46, and Cys49 together coordinate Fe cation.

Belongs to the rubredoxin family. Requires Fe(3+) as cofactor.

Functionally, involved in the hydrocarbon hydroxylating system, which transfers electrons from NADH to rubredoxin reductase and then through rubredoxin to alkane 1 monooxygenase. This chain is Rubredoxin-2 (rubA2), found in Rhodococcus erythropolis (Arthrobacter picolinophilus).